Consider the following 431-residue polypeptide: RNA-binding motif, single-stranded-interacting protein 3 (431 aa).

The segment at 28–53 (YAPAPHPMAPPSPSTNSSSNSSGEQL) is disordered. The span at 31–40 (APHPMAPPSP) shows a compositional bias: pro residues. RRM domains are found at residues 56-129 (TNLY…MAKQ) and 135-220 (TNLY…FADG). Disordered stretches follow at residues 220–242 (GGQKKRQGQSKHTQNGRPWPREG) and 393–431 (TSPQTVAPSSQDSSGQQQQLAVDTPSEHAPAYSFQQSKP). Residues 401–411 (SSQDSSGQQQQ) show a composition bias toward low complexity.

Its subcellular location is the cytoplasm. Functionally, binds poly(A) and poly(U) oligoribonucleotides. This Mus musculus (Mouse) protein is RNA-binding motif, single-stranded-interacting protein 3 (Rbms3).